The chain runs to 317 residues: Transaldolase (317 aa).

K126 acts as the Schiff-base intermediate with substrate in catalysis.

Belongs to the transaldolase family. Type 1 subfamily. Homodimer.

The protein resides in the cytoplasm. It carries out the reaction D-sedoheptulose 7-phosphate + D-glyceraldehyde 3-phosphate = D-erythrose 4-phosphate + beta-D-fructose 6-phosphate. The protein operates within carbohydrate degradation; pentose phosphate pathway; D-glyceraldehyde 3-phosphate and beta-D-fructose 6-phosphate from D-ribose 5-phosphate and D-xylulose 5-phosphate (non-oxidative stage): step 2/3. Its function is as follows. Transaldolase is important for the balance of metabolites in the pentose-phosphate pathway. The sequence is that of Transaldolase from Burkholderia lata (strain ATCC 17760 / DSM 23089 / LMG 22485 / NCIMB 9086 / R18194 / 383).